A 927-amino-acid polypeptide reads, in one-letter code: Disks large homolog 1 (927 aa).

The 61-residue stretch at Arg-4–Pro-64 folds into the L27 domain. Thr-115 is modified (phosphothreonine). Phosphoserine occurs at positions 122, 138, and 158. Residues Pro-162–Tyr-212 form an interaction with SH3 domains region. Residues Glu-224–Arg-546 are required for interaction with MARCHF2. 3 consecutive PDZ domains span residues Gly-230–Ile-317, Gly-325–Asp-412, and Thr-474–Ala-555. Position 232 is a phosphoserine (Ser-232). Residue Tyr-399 is modified to Phosphotyrosine. Residues Ser-568, Ser-573, Ser-575, Ser-579, Ser-598, Ser-619, Ser-707, Ser-710, and Ser-857 each carry the phosphoserine modification. The 71-residue stretch at Lys-581–Glu-651 folds into the SH3 domain. Residues Arg-683–Met-858 enclose the Guanylate kinase-like domain. Positions Lys-691–Gln-719 are disordered. Residues His-704–Arg-717 are compositionally biased toward polar residues.

The protein belongs to the MAGUK family. Homotetramer. Interacts (via guanylate kinase-like domain) with DLGAP1, DLGAP2, DLGAP3, DLGAP4 and MAP1A. Interacts (via guanylate kinase-like domain) with KIF13B. May interact with HTR2A. Interacts (via PDZ domains) with GRIA1. Interacts (via PDZ domains) with GRIN2A. Interacts (via PDZ domains) with KCND2 and KCND3. Interacts (via PDZ domains) with KCNA1, KCNA2, KCNA3 and KCNA4. Interacts (via PDZ domains) with ADGRA3. Interacts with KCNF1. Interacts with CAMK2. Interacts with cytoskeleton-associated protein EPB41. Interacts with cytoskeleton-associated protein EZR. Found in a complex with KCNA5 and CAV3. Found in a complex with APC and CTNNB1. Interacts (via PDZ domains) with APC. Interacts with CDH1 through binding to PIK3R1. Forms multiprotein complexes with CASK, LIN7A, LIN7B, LIN7C, APBA1, and KCNJ12. Interacts with TOPK. Forms a tripartite complex composed of DLG1, MPP7 and LIN7 (LIN7A or LIN7C). May interact with TJAP1. Interacts with PTEN. Interacts with FRMPD4 (via C-terminus). Interacts with LRFN1, LRFN2 and LRFN4. Interacts with SFPQ. Interacts (via PDZ domains) with ADGRA2 (via PDZ-binding motif). Interacts with ADAM10; this interaction recruits ADAM10 to the cell membrane during long-term depression in hippocampal neurons. Interacts with DGKI (via PDZ-binding motif). Interacts (via PDZ domains) with MARCHF2 (via PDZ domain); the interaction leads to DLG1 ubiqtuitination and degradation. Interacts (via N-terminus) with MPP3; this interaction connects CADM1 with DLG1 and links CADM1 with the regulatory subunit of phosphoinositide-3-kinase (PI3K) by forming a multiprotein complex and participates in cell spreading. Phosphorylated by MAPK12. Phosphorylation of Ser-232 regulates association with GRIN2A. Post-translationally, ubiquitinated; by MARCHF2 which results in its degradation.

The protein resides in the cell membrane. The protein localises to the basolateral cell membrane. Its subcellular location is the endoplasmic reticulum membrane. It is found in the postsynaptic density. It localises to the synapse. The protein resides in the sarcolemma. The protein localises to the apical cell membrane. Its subcellular location is the cell junction. It is found in the cytoplasm. Functionally, essential multidomain scaffolding protein required for normal development. Recruits channels, receptors and signaling molecules to discrete plasma membrane domains in polarized cells. Promotes epithelial cell layer barrier function via maintaining cell-cell adhesion. May also play a role in adherens junction assembly, signal transduction, cell proliferation, synaptogenesis and lymphocyte activation. Regulates the excitability of cardiac myocytes by modulating the functional expression of Kv4 channels. Functional regulator of Kv1.5 channel. During long-term depression in hippocampal neurons, it recruits ADAM10 to the plasma membrane. The sequence is that of Disks large homolog 1 (DLG1) from Canis lupus familiaris (Dog).